Reading from the N-terminus, the 306-residue chain is 3-methyl-2-oxobutanoate hydroxymethyltransferase (306 aa).

Mg(2+) contacts are provided by Asp-53 and Asp-96. 3-methyl-2-oxobutanoate is bound by residues 53–54, Asp-96, and Lys-126; that span reads DS. A Mg(2+)-binding site is contributed by Glu-128. Catalysis depends on Glu-195, which acts as the Proton acceptor.

The protein belongs to the PanB family. Homodecamer; pentamer of dimers. Mg(2+) is required as a cofactor.

The protein resides in the cytoplasm. It catalyses the reaction 3-methyl-2-oxobutanoate + (6R)-5,10-methylene-5,6,7,8-tetrahydrofolate + H2O = 2-dehydropantoate + (6S)-5,6,7,8-tetrahydrofolate. Its pathway is cofactor biosynthesis; (R)-pantothenate biosynthesis; (R)-pantoate from 3-methyl-2-oxobutanoate: step 1/2. In terms of biological role, catalyzes the reversible reaction in which hydroxymethyl group from 5,10-methylenetetrahydrofolate is transferred onto alpha-ketoisovalerate to form ketopantoate. The chain is 3-methyl-2-oxobutanoate hydroxymethyltransferase from Anaeromyxobacter sp. (strain K).